The sequence spans 407 residues: 4-hydroxy-3-methylbut-2-en-1-yl diphosphate synthase (ferredoxin) (407 aa).

Positions 316, 319, 350, and 357 each coordinate [4Fe-4S] cluster.

This sequence belongs to the IspG family. [4Fe-4S] cluster serves as cofactor.

The enzyme catalyses (2E)-4-hydroxy-3-methylbut-2-enyl diphosphate + 2 oxidized [2Fe-2S]-[ferredoxin] + H2O = 2-C-methyl-D-erythritol 2,4-cyclic diphosphate + 2 reduced [2Fe-2S]-[ferredoxin] + H(+). It functions in the pathway isoprenoid biosynthesis; isopentenyl diphosphate biosynthesis via DXP pathway; isopentenyl diphosphate from 1-deoxy-D-xylulose 5-phosphate: step 5/6. Its function is as follows. Converts 2C-methyl-D-erythritol 2,4-cyclodiphosphate (ME-2,4cPP) into 1-hydroxy-2-methyl-2-(E)-butenyl 4-diphosphate. This chain is 4-hydroxy-3-methylbut-2-en-1-yl diphosphate synthase (ferredoxin), found in Prochlorococcus marinus (strain SARG / CCMP1375 / SS120).